We begin with the raw amino-acid sequence, 377 residues long: uncharacterized protein (377 aa).

Residues 1 to 22 (MKFKYGTVVLGSFLGLSVVLAA) form the signal peptide. C23 carries the N-palmitoyl cysteine lipid modification. A lipid anchor (S-diacylglycerol cysteine) is attached at C23. The tract at residues 217 to 260 (AKANGETNQKGRKAAKSNKTALVQLKNGADTTTNEENKDTKTSD) is disordered. A compositionally biased stretch (basic and acidic residues) spans 251-260 (EENKDTKTSD).

Belongs to the MG185/MG260 family.

The protein resides in the cell membrane. This is an uncharacterized protein from Mycoplasma pneumoniae (strain ATCC 29342 / M129 / Subtype 1) (Mycoplasmoides pneumoniae).